Consider the following 216-residue polypeptide: Ribonuclease HII (216 aa).

In terms of domain architecture, RNase H type-2 spans 28 to 216; sequence ACIAGIDEAG…GVKEYVRSEE (189 aa). A divalent metal cation contacts are provided by D34, E35, and D126.

It belongs to the RNase HII family. Mn(2+) is required as a cofactor. Mg(2+) serves as cofactor.

It is found in the cytoplasm. It catalyses the reaction Endonucleolytic cleavage to 5'-phosphomonoester.. Endonuclease that specifically degrades the RNA of RNA-DNA hybrids. This Geotalea uraniireducens (strain Rf4) (Geobacter uraniireducens) protein is Ribonuclease HII.